Here is a 424-residue protein sequence, read N- to C-terminus: Enolase (424 aa).

Gln-162 is a (2R)-2-phosphoglycerate binding site. The active-site Proton donor is the Glu-204. Positions 241, 284, and 311 each coordinate Mg(2+). (2R)-2-phosphoglycerate is bound by residues Lys-336, Arg-365, Ser-366, and Lys-387. Lys-336 functions as the Proton acceptor in the catalytic mechanism.

This sequence belongs to the enolase family. Mg(2+) serves as cofactor.

Its subcellular location is the cytoplasm. The protein localises to the secreted. It is found in the cell surface. The catalysed reaction is (2R)-2-phosphoglycerate = phosphoenolpyruvate + H2O. It participates in carbohydrate degradation; glycolysis; pyruvate from D-glyceraldehyde 3-phosphate: step 4/5. In terms of biological role, catalyzes the reversible conversion of 2-phosphoglycerate (2-PG) into phosphoenolpyruvate (PEP). It is essential for the degradation of carbohydrates via glycolysis. The sequence is that of Enolase from Sinorhizobium fredii (strain NBRC 101917 / NGR234).